The primary structure comprises 441 residues: Histidine--tRNA ligase (441 aa).

It belongs to the class-II aminoacyl-tRNA synthetase family. In terms of assembly, homodimer.

Its subcellular location is the cytoplasm. It catalyses the reaction tRNA(His) + L-histidine + ATP = L-histidyl-tRNA(His) + AMP + diphosphate + H(+). This chain is Histidine--tRNA ligase, found in Synechococcus sp. (strain WH7803).